The chain runs to 274 residues: Large ribosomal subunit protein uL2 (274 aa).

Disordered stretches follow at residues 36 to 61 and 223 to 274; these read QKSKTGGRNSNGRITTRHRGGGHKQR and VAMN…RRKR. Over residues 37 to 46 the composition is skewed to polar residues; sequence KSKTGGRNSN. Basic residues-rich tracts occupy residues 50 to 61 and 254 to 274; these read TTRHRGGGHKQR and KGHKTRKNKRTDKYIVRRRKR.

It belongs to the universal ribosomal protein uL2 family. Part of the 50S ribosomal subunit. Forms a bridge to the 30S subunit in the 70S ribosome.

In terms of biological role, one of the primary rRNA binding proteins. Required for association of the 30S and 50S subunits to form the 70S ribosome, for tRNA binding and peptide bond formation. It has been suggested to have peptidyltransferase activity; this is somewhat controversial. Makes several contacts with the 16S rRNA in the 70S ribosome. This Halorhodospira halophila (strain DSM 244 / SL1) (Ectothiorhodospira halophila (strain DSM 244 / SL1)) protein is Large ribosomal subunit protein uL2.